A 374-amino-acid polypeptide reads, in one-letter code: Golgi-associated kinase 1B (374 aa).

Over 1-38 the chain is Cytoplasmic; it reads MSPDRTGRGSSSSSSSLKRLVCKSFVRAWGRRRPNLRR. Residues 39–61 form a helical; Signal-anchor for type II membrane protein membrane-spanning segment; it reads AVLLICTASAIYGIVIASQVLRG. The Extracellular portion of the chain corresponds to 62-374; the sequence is STHPGKALRK…LLQVYTRLDR (313 aa). Over residues 136–146 the composition is skewed to basic residues; sequence VRPKKRRKYGA. A disordered region spans residues 136-177; it reads VRPKKRRKYGARRPGVVQDTESKKDTLWSKVPNSQHKSQAQS. The segment covering 166-177 has biased composition (polar residues); the sequence is VPNSQHKSQAQS. Residues asparagine 281 and asparagine 314 are each glycosylated (N-linked (GlcNAc...) asparagine).

The protein belongs to the GASK family.

It is found in the golgi apparatus membrane. This chain is Golgi-associated kinase 1B, found in Xenopus laevis (African clawed frog).